A 322-amino-acid polypeptide reads, in one-letter code: Transcription factor Atoh8 (322 aa).

Disordered stretches follow at residues 77–96 (PVPA…DTAR), 101–144 (IRAP…EAHS), and 159–221 (PPAR…ATAA). A compositionally biased stretch (basic and acidic residues) spans 101-111 (IRAPEVSDARK). The interval 231–244 (TRRLLANARERTRV) is basic motif; degenerate. The bHLH domain occupies 231–283 (TRRLLANARERTRVHTISAAFEALRKQVPCYSYGQKLSKLAILRIACNYILSL). A helix-loop-helix motif region spans residues 245-283 (HTISAAFEALRKQVPCYSYGQKLSKLAILRIACNYILSL).

In terms of assembly, efficient DNA binding requires dimerization with another bHLH protein. Interacts with NEUROG3 and NEUROD1. Interacts with ZFPM2; mediates indirect interaction with GATA4. Forms a heterodimer with TCF3; repress transcription of TCF3 and TCF3/NEUROG3 dimer-induced transactivation of E box-dependent promoters. Expressed by subsets of mature neurons. Expressed in kidney (podocytes). Expression is restricted to the atria, lung mesenchyme, and vascular smooth muscle.

The protein localises to the nucleus. It is found in the nucleus speckle. It localises to the cytoplasm. In terms of biological role, transcription factor that binds a palindromic (canonical) core consensus DNA sequence 5'-CANNTG- 3' known as an E-box element, possibly as a heterodimer with other bHLH proteins. Regulates endothelial cell proliferation, migration and tube-like structures formation. Modulates endothelial cell differentiation through NOS3. May be implicated in specification and differentiation of neuronal cell lineages in the brain. May participate in kidney development and may be involved in podocyte differentiation. During early embryonic development is involved in tissue-specific differentiation processes that are dependent on class II bHLH factors and namely modulates the differentiation program initiated by the pro-endocrine factor NEUROG3. During myogenesis, may play a role during the transition of myoblasts from the proliferative phase to the differentiation phase. Positively regulates HAMP transcription in two ways, firstly by acting directly on the HAMP promoter via E-boxes binding and indirectly through increased phosphorylation of SMAD protein complex. Repress NEUROG3-dependent gene activation in a gene-specific manner through at least two mechanisms; requires only either the sequestering of a general partner such as TCF3 through heterodimerization, either also requires binding of the bHLH domain to DNA via a basic motif. In Mus musculus (Mouse), this protein is Transcription factor Atoh8.